The following is a 370-amino-acid chain: Histidinol-phosphate aminotransferase 3 (370 aa).

At K233 the chain carries N6-(pyridoxal phosphate)lysine.

This sequence belongs to the class-II pyridoxal-phosphate-dependent aminotransferase family. Histidinol-phosphate aminotransferase subfamily. In terms of assembly, homodimer. Pyridoxal 5'-phosphate is required as a cofactor.

The enzyme catalyses L-histidinol phosphate + 2-oxoglutarate = 3-(imidazol-4-yl)-2-oxopropyl phosphate + L-glutamate. It participates in amino-acid biosynthesis; L-histidine biosynthesis; L-histidine from 5-phospho-alpha-D-ribose 1-diphosphate: step 7/9. In Burkholderia lata (strain ATCC 17760 / DSM 23089 / LMG 22485 / NCIMB 9086 / R18194 / 383), this protein is Histidinol-phosphate aminotransferase 3.